We begin with the raw amino-acid sequence, 883 residues long: Aldehyde-alcohol dehydrogenase (883 aa).

An aldehyde dehydrogenase region spans residues Lys13 to Asn456. Residues Ile121–Asn126, Gly206, and Gly224 each bind NAD(+). The active-site Nucleophile is the Cys257. NAD(+) contacts are provided by residues Glu355, Leu435, and Gly438–Asn443. Residues Ile457 to Arg464 are linker. Residues Asp500, Asp534, Gly561–Asp565, Thr612–Thr613, Val625, Lys634, and Leu653 contribute to the NAD(+) site. Asp668, His672, His736, and His750 together coordinate Fe cation.

In the N-terminal section; belongs to the aldehyde dehydrogenase family. This sequence in the C-terminal section; belongs to the iron-containing alcohol dehydrogenase family. Requires Fe(2+) as cofactor.

It catalyses the reaction ethanol + NAD(+) = acetaldehyde + NADH + H(+). The enzyme catalyses an aldehyde + NAD(+) + H2O = a carboxylate + NADH + 2 H(+). Its function is as follows. Has alcohol dehydrogenase activity. Has aldehyde dehydrogenase activity. May play a role in enhancing virulence in mice. May be considered a potential virulence factor. The chain is Aldehyde-alcohol dehydrogenase from Streptococcus pneumoniae serotype 4 (strain ATCC BAA-334 / TIGR4).